A 366-amino-acid chain; its full sequence is Putative ankyrin repeat protein RBE_0601 (366 aa).

6 ANK repeats span residues Lys39–Glu68, Leu94–Thr124, His131–Gln160, Val162–Asp186, Lys210–Ala239, and Ile250–Lys280.

The chain is Putative ankyrin repeat protein RBE_0601 from Rickettsia bellii (strain RML369-C).